Reading from the N-terminus, the 273-residue chain is MGRHNENIGHQARKRFGQNFLHDQGVIDRIVRSINPKSDQNLVEIGPGLGALTEELLKSGGSVTAVELDRDLTPILRTKFFNYPQFNVIEADALKFDFTQLATPERPMRLIGNLPYNISTPLIFHLLTFRGLVQDMYFMLQKEVVDRLAAKPGEDAYGRLGVMAQYYCKVESLFNVGPGAFQPAPKVWSAIVRLTPYTEPPLACKDVATLTTVVRQAFAMRRKTLRNTLKQLITVDALQSLDIDPQIRPERLGLPEFVRIADYVYDHPLENES.

Asn19, Leu21, Gly46, Glu67, Asp92, and Asn113 together coordinate S-adenosyl-L-methionine.

The protein belongs to the class I-like SAM-binding methyltransferase superfamily. rRNA adenine N(6)-methyltransferase family. RsmA subfamily.

It localises to the cytoplasm. The enzyme catalyses adenosine(1518)/adenosine(1519) in 16S rRNA + 4 S-adenosyl-L-methionine = N(6)-dimethyladenosine(1518)/N(6)-dimethyladenosine(1519) in 16S rRNA + 4 S-adenosyl-L-homocysteine + 4 H(+). In terms of biological role, specifically dimethylates two adjacent adenosines (A1518 and A1519) in the loop of a conserved hairpin near the 3'-end of 16S rRNA in the 30S particle. May play a critical role in biogenesis of 30S subunits. In Hahella chejuensis (strain KCTC 2396), this protein is Ribosomal RNA small subunit methyltransferase A.